The chain runs to 562 residues: Arylsulfatase H (562 aa).

Ca(2+) is bound by residues Asp-15, Asp-16, and Cys-55. Cys-55 serves as the catalytic Nucleophile. Cys-55 carries the post-translational modification 3-oxoalanine (Cys). Residue Lys-115 participates in substrate binding. His-117 is a catalytic residue. 2 consecutive transmembrane segments (helical) span residues 167 to 187 and 189 to 209; these read LWIS…PKYA and WFVV…LFFI. His-271 serves as a coordination point for substrate. Residues Asp-323 and Asn-324 each contribute to the Ca(2+) site.

Belongs to the sulfatase family. It depends on Ca(2+) as a cofactor. The conversion to 3-oxoalanine (also known as C-formylglycine, FGly), of a serine or cysteine residue in prokaryotes and of a cysteine residue in eukaryotes, is critical for catalytic activity.

The protein resides in the membrane. The sequence is that of Arylsulfatase H (ARSH) from Canis lupus familiaris (Dog).